A 546-amino-acid polypeptide reads, in one-letter code: Phosphatidylinositol 4-phosphate 5-kinase type-1 alpha (546 aa).

The region spanning 66 to 434 is the PIPK domain; it reads TSSALKGAIQ…RFQRFMCNTV (369 aa). A Glycyl lysine isopeptide (Lys-Gly) (interchain with G-Cter in ubiquitin) cross-link involves residue Lys88. Disordered regions lie at residues 442-475 and 491-518; these read PSPT…SGEH and LGRP…PSFS. Low complexity-rich tracts occupy residues 450–462 and 509–518; these read SGPS…GPSG and GSPVPGPSFS.

As to quaternary structure, interacts with RAC1. Interacts with TUT1. Forms a complex with CDH1/E-cadherin, CTNNB1/beta-catenin and CTNND1 at the plasma membrane upon calcium stimulation. Found in a ternary complex with IRS1 and DGKZ in the absence of insulin stimulation. Interacts with DGKZ. Interacts with PIP4K2C; the interaction inhibits PIP5K1A kinase activity. In terms of tissue distribution, highest expression in brain. Also detected in skeletal muscle, testis, brain and lung.

It is found in the cell membrane. The protein resides in the cytoplasm. It localises to the nucleus. The protein localises to the nucleus speckle. Its subcellular location is the cell projection. It is found in the ruffle. The protein resides in the lamellipodium. The catalysed reaction is a 1,2-diacyl-sn-glycero-3-phospho-(1D-myo-inositol 4-phosphate) + ATP = a 1,2-diacyl-sn-glycero-3-phospho-(1D-myo-inositol-4,5-bisphosphate) + ADP + H(+). It carries out the reaction 1-octadecanoyl-2-(5Z,8Z,11Z,14Z)-eicosatetraenoyl-sn-glycero-3-phospho-1D-myo-inositol 4-phosphate + ATP = 1-octadecanoyl-2-(5Z,8Z,11Z,14Z)-eicosatetraenoyl-sn-glycero-3-phospho-1D-myo-inositol 4,5-bisphosphate + ADP + H(+). The enzyme catalyses 1,2-dihexadecanoyl-sn-glycero-3-phospho-(1D-myo-inositol-4-phosphate) + ATP = 1,2-dihexadecanoyl-sn-glycero-3-phospho-(1D-myo-inositol-4,5-bisphosphate) + ADP + H(+). It catalyses the reaction 1-octadecanoyl-2-(9Z)-octadecenoyl-sn-glycero-3-phospho-1D-myo-inositol 4-phosphate + ATP = 1-octadecanoyl-2-(9Z)-octadecenoyl-sn-glycero-3-phospho-1D-myo-inositol 4,5-bisphosphate + ADP + H(+). The catalysed reaction is 1-octadecanoyl-2-(9Z)-octadecenoyl-sn-glycero-3-phospho-1D-myo-inositol + ATP = 1-octadecanoyl-2-(9Z)-octadecenoyl-sn-glycero-3-phospho-1D-myo-inositol 5-phosphate + ADP + H(+). It carries out the reaction 1-octadecanoyl-2-(9Z,12Z)-octadecadienoyl-sn-glycero-3-phospho-1D-myo-inositol + ATP = 1-octadecanoyl-2-(9Z,12Z)-octadecadienoyl-sn-glycero-3-phospho-1D-myo-inositol 5-phosphate + ADP + H(+). The enzyme catalyses 1-octadecanoyl-2-(5Z,8Z,11Z,14Z-eicosatetraenoyl)-sn-glycero-3-phospho-(1D-myo-inositol) + ATP = 1-octadecanoyl-2-(5Z,8Z,11Z,14Z)-eicosatetraenoyl-sn-glycero-3-phospho-1D-myo-inositol 5-phosphate + ADP + H(+). It catalyses the reaction 1,2-di-(9Z,12Z)-octadecadienoyl-sn-glycero-3-phospho-1D-myo-inositol + ATP = 1,2-di(9Z,12Z)-octadecadienoyl-sn-glycero-3-phospho-1D-myo-inositol 5-phosphate + ADP + H(+). With respect to regulation, activated by phosphatidic acid. In terms of biological role, catalyzes the phosphorylation of phosphatidylinositol 4-phosphate (PtdIns(4)P/PI4P) to form phosphatidylinositol 4,5-bisphosphate (PtdIns(4,5)P2/PIP2), a lipid second messenger that regulates several cellular processes such as signal transduction, vesicle trafficking, actin cytoskeleton dynamics, cell adhesion, and cell motility. PtdIns(4,5)P2 can directly act as a second messenger or can be utilized as a precursor to generate other second messengers: inositol 1,4,5-trisphosphate (IP3), diacylglycerol (DAG) or phosphatidylinositol-3,4,5-trisphosphate (PtdIns(3,4,5)P3/PIP3). PIP5K1A-mediated phosphorylation of PtdIns(4)P is the predominant pathway for PtdIns(4,5)P2 synthesis. Can also use phosphatidylinositol (PtdIns) as substrate in vitro. Together with PIP5K1C, is required for phagocytosis, both enzymes regulating different types of actin remodeling at sequential steps. Promotes particle ingestion by activating the WAS GTPase-binding protein that induces Arp2/3 dependent actin polymerization at the nascent phagocytic cup. Together with PIP5K1B, is required, after stimulation by G-protein coupled receptors, for the synthesis of IP3 that will induce stable platelet adhesion. Recruited to the plasma membrane by the E-cadherin/beta-catenin complex where it provides the substrate PtdIns(4,5)P2 for the production of PtdIns(3,4,5)P3, IP3 and DAG, that will mobilize internal calcium and drive keratinocyte differentiation. Positively regulates insulin-induced translocation of SLC2A4 to the cell membrane in adipocytes. Together with PIP5K1C has a role during embryogenesis. Independently of its catalytic activity, is required for membrane ruffling formation, actin organization and focal adhesion formation during directional cell migration by controlling integrin-induced translocation of the small GTPase RAC1 to the plasma membrane. Also functions in the nucleus where it acts as an activator of TUT1 adenylyltransferase activity in nuclear speckles, thereby regulating mRNA polyadenylation of a select set of mRNAs. The polypeptide is Phosphatidylinositol 4-phosphate 5-kinase type-1 alpha (Mus musculus (Mouse)).